Consider the following 460-residue polypeptide: MGTIHLFRKPQRSFFGKLLQEFRLVAADRRSWKILLFGAINVLCTGFLLMWCSSTNSIALTAYTYLTIFDLFSLITCLISYWVMMRKPSPVYSFGFERLEVLAVFASTVLAQLGALFILKESAERFLEQPEIHTGRLLVGTFVALSFNLFTMLSIRNKPFAYVSEAASTSWLQEHVADLSRSLCGLIPGLSSIFLPRMNPFVLIDLAGAFALCITYMLIEINNYFAVDTASAIAIALMTFGTMYPMSVYSGKVLLQTTPPHVIGQLDKLIREVSTLDGVLEVRNEHFWTLGFGSLAGSVHVRIRRDANEQMVLAHVSNRLCTLVSTLTVQIFKDDWIRPALSSGPVAPNVLNFSDHHVIPMPLLKNVDERTPVTSTPAKPSSPPPEFSFNTPGKNVSPVILLNTQTRPYSLGLNRGHTPYSSVFSQGLAFPGVGAGQGLRPTFPHIPSRYGINRMGQPRP.

Residues 1–33 (MGTIHLFRKPQRSFFGKLLQEFRLVAADRRSWK) lie on the Cytoplasmic side of the membrane. The chain crosses the membrane as a helical span at residues 34–54 (ILLFGAINVLCTGFLLMWCSS). Over 55-64 (TNSIALTAYT) the chain is Extracellular. A helical transmembrane segment spans residues 65 to 85 (YLTIFDLFSLITCLISYWVMM). Residues 86–98 (RKPSPVYSFGFER) are Cytoplasmic-facing. Residues 99 to 119 (LEVLAVFASTVLAQLGALFIL) form a helical membrane-spanning segment. The Extracellular segment spans residues 120 to 134 (KESAERFLEQPEIHT). A helical membrane pass occupies residues 135 to 155 (GRLLVGTFVALSFNLFTMLSI). Over 156 to 200 (RNKPFAYVSEAASTSWLQEHVADLSRSLCGLIPGLSSIFLPRMNP) the chain is Cytoplasmic. A helical membrane pass occupies residues 201–221 (FVLIDLAGAFALCITYMLIEI). Topologically, residues 222 to 223 (NN) are extracellular. Residues 224-244 (YFAVDTASAIAIALMTFGTMY) form a helical membrane-spanning segment. Residues 245–460 (PMSVYSGKVL…GINRMGQPRP (216 aa)) are Cytoplasmic-facing. The segment at 371 to 390 (TPVTSTPAKPSSPPPEFSFN) is disordered.

Belongs to the cation diffusion facilitator (CDF) transporter (TC 2.A.4) family. SLC30A subfamily. Heterodimer with SLC30A5; form a functional zinc ion transmembrane transporter. As to expression, expressed in brain and liver, and to a lower extent also in lung. Highly expressed in brain (at protein level).

The protein resides in the golgi apparatus. It localises to the trans-Golgi network membrane. In terms of biological role, has probably no intrinsic transporter activity but together with SLC30A5 forms a functional zinc ion:proton antiporter heterodimer, mediating zinc entry into the lumen of organelles along the secretory pathway. As part of that zinc ion:proton antiporter, contributes to zinc ion homeostasis within the early secretory pathway and regulates the activation and folding of enzymes like alkaline phosphatases and enzymes involved in phosphatidylinositol glycan anchor biosynthesis. The sequence is that of Zinc transporter 6 (Slc30a6) from Mus musculus (Mouse).